The primary structure comprises 725 residues: ATP-dependent zinc metalloprotease FtsH (725 aa).

Topologically, residues 1 to 11 (MDKMKKPKINW) are cytoplasmic. The chain crosses the membrane as a helical span at residues 12–32 (LLIVIVGIIAALLITVLVLLF). Topologically, residues 33-160 (SPKTQPKSFD…LFGQHIVQEN (128 aa)) are extracellular. A helical membrane pass occupies residues 161-181 (GFITFIKAIWFPALIAIIIFL). The Cytoplasmic segment spans residues 182 to 725 (GYKAQSRAAS…EEETLAEKAE (544 aa)). 252-259 (GPPGTGKT) is an ATP binding site. His-474 lines the Zn(2+) pocket. Glu-475 is a catalytic residue. 2 residues coordinate Zn(2+): His-478 and Asp-552. The tract at residues 680–725 (QVNESQEKDKQKNAQIKEDLSKMDKKDNLTKAKDKGEEETLAEKAE) is disordered. Basic and acidic residues predominate over residues 684 to 725 (SQEKDKQKNAQIKEDLSKMDKKDNLTKAKDKGEEETLAEKAE).

It in the central section; belongs to the AAA ATPase family. The protein in the C-terminal section; belongs to the peptidase M41 family. In terms of assembly, homohexamer. Requires Zn(2+) as cofactor.

The protein localises to the cell membrane. In terms of biological role, acts as a processive, ATP-dependent zinc metallopeptidase for both cytoplasmic and membrane proteins. Plays a role in the quality control of integral membrane proteins. This chain is ATP-dependent zinc metalloprotease FtsH, found in Mycoplasmopsis pulmonis (strain UAB CTIP) (Mycoplasma pulmonis).